Consider the following 840-residue polypeptide: DNA mismatch repair protein MutS (840 aa).

ATP is bound at residue 601-608; that stretch reads GPNMSGKS.

Belongs to the DNA mismatch repair MutS family.

In terms of biological role, this protein is involved in the repair of mismatches in DNA. It is possible that it carries out the mismatch recognition step. This protein has a weak ATPase activity. This Lactococcus lactis subsp. cremoris (strain SK11) protein is DNA mismatch repair protein MutS.